We begin with the raw amino-acid sequence, 83 residues long: Exodeoxyribonuclease 7 small subunit (83 aa).

It belongs to the XseB family. In terms of assembly, heterooligomer composed of large and small subunits.

The protein localises to the cytoplasm. The enzyme catalyses Exonucleolytic cleavage in either 5'- to 3'- or 3'- to 5'-direction to yield nucleoside 5'-phosphates.. Its function is as follows. Bidirectionally degrades single-stranded DNA into large acid-insoluble oligonucleotides, which are then degraded further into small acid-soluble oligonucleotides. In Aeromonas salmonicida (strain A449), this protein is Exodeoxyribonuclease 7 small subunit.